The following is a 264-amino-acid chain: Acyl-[acyl-carrier-protein]--UDP-N-acetylglucosamine O-acyltransferase (264 aa).

It belongs to the transferase hexapeptide repeat family. LpxA subfamily. Homotrimer.

The protein resides in the cytoplasm. The catalysed reaction is a (3R)-hydroxyacyl-[ACP] + UDP-N-acetyl-alpha-D-glucosamine = a UDP-3-O-[(3R)-3-hydroxyacyl]-N-acetyl-alpha-D-glucosamine + holo-[ACP]. It participates in glycolipid biosynthesis; lipid IV(A) biosynthesis; lipid IV(A) from (3R)-3-hydroxytetradecanoyl-[acyl-carrier-protein] and UDP-N-acetyl-alpha-D-glucosamine: step 1/6. In terms of biological role, involved in the biosynthesis of lipid A, a phosphorylated glycolipid that anchors the lipopolysaccharide to the outer membrane of the cell. The polypeptide is Acyl-[acyl-carrier-protein]--UDP-N-acetylglucosamine O-acyltransferase (Rickettsia peacockii (strain Rustic)).